Here is a 793-residue protein sequence, read N- to C-terminus: WASP homolog-associated protein with actin, membranes and microtubules (793 aa).

A mediates association with membranes region spans residues 1–253; that stretch reads MDSEQPDSLD…EVATSCKLGI (253 aa). Residues 254–623 form a mediates interaction with microtubules region; sequence LKSLDEDELG…FVPVSDQTLS (370 aa). Coiled-coil stretches lie at residues 265-290 and 445-503; these read RRVA…SIQD and LGDN…LHQH. 2 disordered regions span residues 556-661 and 675-699; these read SMVS…SFQG and EDRP…PGSM. Positions 566–579 are enriched in basic residues; the sequence is SQKRLSTAHHHKTA. Residues 618 to 628 show a composition bias toward polar residues; that stretch reads SDQTLSGSSED. The mediates actin nucleation stretch occupies residues 624-793; the sequence is GSSEDLSLPP…DEPSPTEWDR (170 aa). The span at 632–654 shows a compositional bias: pro residues; that stretch reads PPQPPAPPLPPPPPPPPPPPLPP. WH2 domains lie at 698 to 716 and 728 to 745; these read SMDE…LRKV and VNEQ…LKKV. Residues 755–785 adopt a coiled-coil conformation; sequence KKSTSDLERSIREALERIKKVSADSEEDNDE. Residues 772–793 form a disordered region; the sequence is IKKVSADSEEDNDEPSPTEWDR. Residues 778 to 787 show a composition bias toward acidic residues; it reads DSEEDNDEPS. At S779 the chain carries Phosphoserine.

Interacts with ACTR3; indicative for an association with the ARP2/3 complex. Associates with microtubules; in vitro binds to tubulin heterodimer in a 1:1 stoichiometry; decorates microtubules with a repeat of 80 A along protofilaments. Interacts with RHOD (in GTP-bound form).

The protein resides in the cytoplasm. It is found in the endoplasmic reticulum-Golgi intermediate compartment. The protein localises to the cytoplasmic vesicle membrane. It localises to the golgi apparatus. Its subcellular location is the cis-Golgi network. Acts as a nucleation-promoting factor (NPF) that stimulates Arp2/3-mediated actin polymerization both at the Golgi apparatus and along tubular membranes. Involved as a regulator of Golgi positioning and morphology. Its activity in membrane tubulation requires F-actin and interaction with microtubules. Proposed to use coordinated actin-nucleating and microtubule-binding activities of distinct WHAMM molecules to drive membrane tubule elongation; when MT-bound can recruit and remodel membrane vesicles but is prevented to activate the Arp2/3 complex. Required for RhoD-dependent actin reorganization such as in cell adhesion and cell migration. Participates in vesicle transport between the endoplasmic reticulum and the Golgi complex. This Mus musculus (Mouse) protein is WASP homolog-associated protein with actin, membranes and microtubules (Whamm).